Here is a 952-residue protein sequence, read N- to C-terminus: Leucine--tRNA ligase (952 aa).

A 'HIGH' region motif is present at residues 48–58; the sequence is PYLNGVLHAGH. A 'KMSKS' region motif is present at residues 644–648; the sequence is KLSKS. Position 647 (Lys647) interacts with ATP.

The protein belongs to the class-I aminoacyl-tRNA synthetase family.

The protein localises to the cytoplasm. It catalyses the reaction tRNA(Leu) + L-leucine + ATP = L-leucyl-tRNA(Leu) + AMP + diphosphate. The protein is Leucine--tRNA ligase of Methanococcus vannielii (strain ATCC 35089 / DSM 1224 / JCM 13029 / OCM 148 / SB).